Reading from the N-terminus, the 552-residue chain is MSHVQLDAIGYHLPDGRALLHDVSLRVGEGSKTALIGPNGTGKTTLLRIIAGDADPHDGAVTRGGQLGVMRQFIGSVRDDSTVRDLLLSVAPDRIRRAAEHLDRAELALMECDSEQDQIKYAQALADWADVGGYEFETQCDVHTTAALGIPYELARFRGVNTLSGGQQKRLVLESLLGGPHQVLLLDEPDNYLDVPAKRWLEERLVESPKTILFVSHDRELINRAAGQIATLEPTRAGSTLWVHPGSFTTYHQARADRNAKLAELRRRWDEQRAALRDLVLMYRQKAAYNSDMASRLQAAETRLRRFDEAGPPEAVPLRQNVRMRLAGGRTAKRAVIADNLELTGLTRPFDTELWYGDRVAVLGGNGTGKSHFLRLLACGGTDPELDQLPVGDMIPEPVNHDGRLRLGARVRPGWFAQTHHHAGLMDRTLLDILHHGDERRAGHGREQASRILDRYGLAPSAEQTFSSLSGGQQGRFQILLLELMGSTLLLLDEPTDNLDLHSAEALEDALAAFDGTVIAVTHDRWFARTFTRFLIFGEDGKVRESVEPQWV.

ABC transporter domains are found at residues 4-270 and 332-552; these read VQLD…RRWD and AKRA…PQWV. ATP contacts are provided by residues 37-44 and 364-371; these read GPNGTGKT and GGNGTGKS.

Belongs to the ABC transporter superfamily. ABCF family.

The enzyme catalyses ATP + H2O = ADP + phosphate + H(+). The ATPase activity can be inhibited by ribosome-targeting antibiotics. Functionally, exhibits ATP hydrolysis activity and contributes to macrolide resistance by ribosome protection. Can also hydrolyze GTP, TTP and CTP but to a lesser extent than ATP. In vitro, rescues the transcription and translation activities affected by macrolides. Increased expression correlates with increased resistance to clarithromycin, one of the main drugs used to treat M.abscessus. The protein is Antibiotic resistance protein MAB_2355c of Mycobacteroides abscessus (strain ATCC 19977 / DSM 44196 / CCUG 20993 / CIP 104536 / JCM 13569 / NCTC 13031 / TMC 1543 / L948) (Mycobacterium abscessus).